Reading from the N-terminus, the 176-residue chain is Large ribosomal subunit protein uL6 (176 aa).

It belongs to the universal ribosomal protein uL6 family. In terms of assembly, part of the 50S ribosomal subunit.

In terms of biological role, this protein binds to the 23S rRNA, and is important in its secondary structure. It is located near the subunit interface in the base of the L7/L12 stalk, and near the tRNA binding site of the peptidyltransferase center. In Burkholderia mallei (strain NCTC 10247), this protein is Large ribosomal subunit protein uL6.